Consider the following 310-residue polypeptide: MEKKLIFGHKNPDTDSICSALVYADLKTKLGANVEPVRLGVISSETAFVLNYFQVKEPRLVETVANEVNEVILVDHNERQQSANDIEQVQVVEVIDHHRIANFETSNPLYFRAEPVGCTTTILKKMYKENGVDIPKEMAGLMLSAIISDTLLLKSPTCTEQDVAAAHELAEIAGVNLEAYGLDMLKAGADLSDKTIEQLLTLDAKEFQMGNAKVEIAQVNAVDVNDVLARQGELEAAMNASIAEKALDLFVFVVTDILNNDSVAIALGSATQAVEKAYQVTLVDNKAVLKGVVSRKKQIVPVLTDTFQAL.

Mn(2+)-binding residues include histidine 9, aspartate 13, aspartate 15, aspartate 75, histidine 97, and aspartate 149.

This sequence belongs to the PPase class C family. Mn(2+) is required as a cofactor.

The protein resides in the cytoplasm. The enzyme catalyses diphosphate + H2O = 2 phosphate + H(+). This is Probable manganese-dependent inorganic pyrophosphatase from Brevibacillus brevis (strain 47 / JCM 6285 / NBRC 100599).